The primary structure comprises 502 residues: High affinity nitrate transporter 2.5 (502 aa).

12 helical membrane-spanning segments follow: residues 51–71 (WFQF…LPVI), 87–107 (IASV…CDLF), 111–131 (LASA…AGIK), 133–153 (PIGF…FVST), 172–192 (IAAG…PIVF), 208–228 (IAFF…LLFG), 264–284 (WITA…DNII), 300–320 (GIIA…GGIF), 334–354 (LWAW…LGQI), 361–381 (IIVM…TFGV), 393–413 (VSGM…LIFF), and 423–443 (GITL…LIYF). Residues 477–502 (LHIGSQKFAETSISERGRATTTHPQT) form a disordered region.

The protein belongs to the major facilitator superfamily. Nitrate/nitrite porter (TC 2.A.1.8) family. Oligomeric molecular complex with NRT3.1. In terms of tissue distribution, expressed in roots, shoots and seeds. Expressed in leaves. Expressed in root hair zone of the primary root and the lateral roots, but not in the lateral root tip or in older parts of the roots. Detected mainly in the epidermis and the cortex. Expressed in shoots only in higher-order veins.

The protein localises to the cell membrane. In terms of biological role, nitrate transporter involved in the constitutive high-affinity transport system (cHATS) under long-term N starvation conditions. Predominantly expressed in roots of nitrate-deprived plants as a 150 kDa molecular complex with NRT3.1 representing the major contributor to cHATS influx. The principal role of this cHATS is to enable roots previously deprived of nitrate to absorb this ion and initiate induction of nitrate-inducible genes. Not involved in transfer of nitrate from roots to shoots. Contributes to phloem loading of nitrate in shoots during N starvation, but not required for growth and nitrate uptake in young plants. Required for the nitrate uptake-independent plant growth promotion and lateral root response to the rhizospheric Phyllobacterium. Might be involved in the transfer of nitrate from stored pools to cytoplasm. This chain is High affinity nitrate transporter 2.5 (NRT2.5), found in Arabidopsis thaliana (Mouse-ear cress).